A 250-amino-acid chain; its full sequence is NADH-quinone oxidoreductase subunit C (250 aa).

The protein belongs to the complex I 30 kDa subunit family. As to quaternary structure, NDH-1 is composed of 14 different subunits. Subunits NuoB, C, D, E, F, and G constitute the peripheral sector of the complex.

Its subcellular location is the cell inner membrane. The enzyme catalyses a quinone + NADH + 5 H(+)(in) = a quinol + NAD(+) + 4 H(+)(out). NDH-1 shuttles electrons from NADH, via FMN and iron-sulfur (Fe-S) centers, to quinones in the respiratory chain. The immediate electron acceptor for the enzyme in this species is believed to be ubiquinone. Couples the redox reaction to proton translocation (for every two electrons transferred, four hydrogen ions are translocated across the cytoplasmic membrane), and thus conserves the redox energy in a proton gradient. The sequence is that of NADH-quinone oxidoreductase subunit C from Xanthomonas campestris pv. campestris (strain 8004).